The sequence spans 882 residues: Chondroitin sulfate synthase 3 (882 aa).

Over 1–7 (MAVRSRR) the chain is Cytoplasmic. The helical; Signal-anchor for type II membrane protein transmembrane segment at 8–28 (PWMSVALGLVLGFTAASWLIA) threads the bilayer. Topologically, residues 29 to 882 (PRVAELSERK…LGVRYNRTLS (854 aa)) are lumenal. Residues 46-167 (SYYGRSAAGP…GDGGAAAPSA (122 aa)) form a disordered region. 2 stretches are compositionally biased toward low complexity: residues 59 to 69 (AQQPLPQPQSR) and 120 to 131 (GATGLPGAPAAE). Residues N155, N279, and N710 are each glycosylated (N-linked (GlcNAc...) asparagine). Residues D720 and H834 each coordinate a divalent metal cation. N-linked (GlcNAc...) asparagine glycosylation occurs at N878.

The protein belongs to the chondroitin N-acetylgalactosaminyltransferase family. Requires Co(2+) as cofactor. Mn(2+) is required as a cofactor. It depends on Cd(2+) as a cofactor. In terms of tissue distribution, detected at low levels in brain, cerebral cortex, uterus and small intestine.

The protein resides in the golgi apparatus. It is found in the golgi stack membrane. It carries out the reaction 3-O-(beta-D-GlcA-(1-&gt;3)-beta-D-GalNAc-(1-&gt;4)-beta-D-GlcA-(1-&gt;3)-beta-D-Gal-(1-&gt;3)-beta-D-Gal-(1-&gt;4)-beta-D-Xyl)-L-seryl-[protein] + UDP-N-acetyl-alpha-D-galactosamine = 3-O-(beta-D-GalNAc-(1-&gt;4)-beta-D-GlcA-(1-&gt;3)-beta-D-GalNAc-(1-&gt;4)-beta-D-GlcA-(1-&gt;3)-beta-D-Gal-(1-&gt;3)-beta-D-Gal-(1-&gt;4)-beta-D-Xyl)-L-seryl-[protein] + UDP + H(+). The enzyme catalyses 3-O-{beta-D-GlcA-(1-&gt;3)-[beta-D-GalNAc-(1-&gt;4)-beta-D-GlcA-(1-&gt;3)](n)-beta-D-GalNAc-(1-&gt;4)-beta-D-GlcA-(1-&gt;3)-beta-D-Gal-(1-&gt;3)-beta-D-Gal-(1-&gt;4)-beta-D-Xyl}-L-seryl-[protein] + UDP-N-acetyl-alpha-D-galactosamine = 3-O-{[beta-D-GalNAc-(1-&gt;4)-beta-D-GlcA-(1-&gt;3)](n+1)-beta-D-GalNAc-(1-&gt;4)-beta-D-GlcA-(1-&gt;3)-beta-D-Gal-(1-&gt;3)-beta-D-Gal-(1-&gt;4)-beta-D-Xyl}-L-seryl-[protein] + UDP + H(+). It catalyses the reaction 3-O-(beta-D-GalNAc-(1-&gt;4)-beta-D-GlcA-(1-&gt;3)-beta-D-Gal-(1-&gt;3)-beta-D-Gal-(1-&gt;4)-beta-D-Xyl)-L-seryl-[protein] + UDP-alpha-D-glucuronate = 3-O-(beta-D-GlcA-(1-&gt;3)-beta-D-GalNAc-(1-&gt;4)-beta-D-GlcA-(1-&gt;3)-beta-D-Gal-(1-&gt;3)-beta-D-Gal-(1-&gt;4)-beta-D-Xyl)-L-seryl-[protein] + UDP + H(+). The catalysed reaction is 3-O-{[beta-D-GalNAc-(1-&gt;4)-beta-D-GlcA-(1-&gt;3)](n)-beta-D-GalNAc-(1-&gt;4)-beta-D-GlcA-(1-&gt;3)-beta-D-Gal-(1-&gt;3)-beta-D-Gal-(1-&gt;4)-beta-D-Xyl}-L-seryl-[protein] + UDP-alpha-D-glucuronate = 3-O-{beta-D-GlcA-(1-&gt;3)-[beta-D-GalNAc-(1-&gt;4)-beta-D-GlcA-(1-&gt;3)](n)-beta-D-GalNAc-(1-&gt;4)-beta-D-GlcA-(1-&gt;3)-beta-D-Gal-(1-&gt;3)-beta-D-Gal-(1-&gt;4)-beta-D-Xyl}-L-seryl-[protein] + UDP + H(+). Has both beta-1,3-glucuronic acid and beta-1,4-N-acetylgalactosamine transferase activity. Transfers glucuronic acid (GlcUA) from UDP-GlcUA and N-acetylgalactosamine (GalNAc) from UDP-GalNAc to the non-reducing end of the elongating chondroitin polymer. Specific activity is much reduced compared to CHSY1. The chain is Chondroitin sulfate synthase 3 (CHSY3) from Homo sapiens (Human).